A 597-amino-acid chain; its full sequence is MPVRQLPETIVNRIAAGEVVERPASVVKELVENAIDAGACRVDVFSDGGGRRKIVIADDGGGMTQADLALAVDRHATSKLDDEDLLAIRTLGFRGEALPSIGAVARLSLTTRHAAEPHAWTLSVEGGAKSPISPAALSQGTRVEVADLFFATPARLKFLKTDRTEAEAIREVVRRLAMARPDIAFTLAGEERAPVTWAAALPGAPGRLTRLGDILGADFRANAIEVGSEREGVAVEGFAASPSLTRANALGQYLFVNGRPVRDKLILGAVRAAYADYLPRDRHPVVALFVTLDSREVDANVHPAKTEVRFRNAGLVRALIVHALKEGLAREGRRTAANSAGAAISNFRPASMPPGNWDWRSSPSYPVGGGSSAAPSFGERPQAAFDVGGPSADIRPHEAAPELLDRPLGAARTQIHETYIVSQTRDGLIVVDQHAAHERIVYERLKASLDANGVQRQILLIPDIVEMDEATVERLVARAEELSKFGLVVESFGPGAVAVRETPSLLGKVNAASLLRDLAEHMAEWDEALPLERRLMHVAATMACHGSVRAGRVLKPEEMNALLREMEATPNSGQCNHGRPTYVELTLADIEKLFGRR.

The protein belongs to the DNA mismatch repair MutL/HexB family.

In terms of biological role, this protein is involved in the repair of mismatches in DNA. It is required for dam-dependent methyl-directed DNA mismatch repair. May act as a 'molecular matchmaker', a protein that promotes the formation of a stable complex between two or more DNA-binding proteins in an ATP-dependent manner without itself being part of a final effector complex. This Rhodopseudomonas palustris (strain BisB5) protein is DNA mismatch repair protein MutL.